Reading from the N-terminus, the 518-residue chain is Phytoene desaturase (neurosporene-forming) (518 aa).

FAD is bound at residue 14-47; the sequence is LVIGSGLGGLAAAMRLGAKGWRVTVIDKLDVPGG.

It belongs to the carotenoid/retinoid oxidoreductase family. Requires FAD as cofactor.

It catalyses the reaction 15-cis-phytoene + 3 A = all-trans-neurosporene + 3 AH2. It participates in carotenoid biosynthesis. Its function is as follows. Converts phytoene into all-trans-neurosporene as the major product, via the intermediary of phytofluene and zeta-carotene, by the introduction of three double bonds. The polypeptide is Phytoene desaturase (neurosporene-forming) (crtI) (Cereibacter sphaeroides (strain ATCC 17023 / DSM 158 / JCM 6121 / CCUG 31486 / LMG 2827 / NBRC 12203 / NCIMB 8253 / ATH 2.4.1.) (Rhodobacter sphaeroides)).